The primary structure comprises 89 residues: Signal recognition particle 19 kDa protein (89 aa).

It belongs to the SRP19 family. As to quaternary structure, part of the signal recognition particle protein translocation system, which is composed of SRP and FtsY. Archaeal SRP consists of a 7S RNA molecule of 300 nucleotides and two protein subunits: SRP54 and SRP19.

It localises to the cytoplasm. Involved in targeting and insertion of nascent membrane proteins into the cytoplasmic membrane. Binds directly to 7S RNA and mediates binding of the 54 kDa subunit of the SRP. The protein is Signal recognition particle 19 kDa protein of Methanococcus maripaludis (strain DSM 14266 / JCM 13030 / NBRC 101832 / S2 / LL).